The chain runs to 309 residues: Homoserine kinase (309 aa).

91 to 101 (PIGSGLGSSAC) serves as a coordination point for ATP.

The protein belongs to the GHMP kinase family. Homoserine kinase subfamily.

The protein localises to the cytoplasm. The catalysed reaction is L-homoserine + ATP = O-phospho-L-homoserine + ADP + H(+). The protein operates within amino-acid biosynthesis; L-threonine biosynthesis; L-threonine from L-aspartate: step 4/5. Its function is as follows. Catalyzes the ATP-dependent phosphorylation of L-homoserine to L-homoserine phosphate. This is Homoserine kinase from Pectobacterium atrosepticum (strain SCRI 1043 / ATCC BAA-672) (Erwinia carotovora subsp. atroseptica).